A 313-amino-acid chain; its full sequence is tRNA(Ile)-lysidine synthase (313 aa).

Ser37–Ser42 lines the ATP pocket.

It belongs to the tRNA(Ile)-lysidine synthase family.

The protein resides in the cytoplasm. The enzyme catalyses cytidine(34) in tRNA(Ile2) + L-lysine + ATP = lysidine(34) in tRNA(Ile2) + AMP + diphosphate + H(+). Functionally, ligates lysine onto the cytidine present at position 34 of the AUA codon-specific tRNA(Ile) that contains the anticodon CAU, in an ATP-dependent manner. Cytidine is converted to lysidine, thus changing the amino acid specificity of the tRNA from methionine to isoleucine. The protein is tRNA(Ile)-lysidine synthase of Corynebacterium efficiens (strain DSM 44549 / YS-314 / AJ 12310 / JCM 11189 / NBRC 100395).